The sequence spans 274 residues: Nickel/cobalt efflux system RcnA (274 aa).

Topologically, residues 1 to 12 (MGEFPTLLQQGN) are periplasmic. Residues 13 to 33 (GWFFIPSAILLGILHGLEPGH) form a helical membrane-spanning segment. The Cytoplasmic portion of the chain corresponds to 34–51 (SKTMMAAFIIAIKGTVKQ). Residues 52-72 (AVMLGLAATLSHTAIVWLIAL) form a helical membrane-spanning segment. Residues 73–85 (GGMYLSRAFTAQS) lie on the Periplasmic side of the membrane. Residues 86–106 (VEPWLQLISAIIILSTACWMF) traverse the membrane as a helical segment. Residues 107 to 174 (WRTWRGEQQW…FDGQTVTNGQ (68 aa)) are Cytoplasmic-facing. Positions 122–141 (HHDHDHDHDHDHDHHGHIHP) are enriched in basic and acidic residues. Residues 122 to 143 (HHDHDHDHDHDHDHHGHIHPEG) are disordered. Residues 175 to 195 (ILLFGLTGGLIPCPAAITVLL) traverse the membrane as a helical segment. Residues 196–209 (ICIQLKAFTLGATM) lie on the Periplasmic side of the membrane. The chain crosses the membrane as a helical span at residues 210–230 (VLSFSLSLALTLVTVGVGAAI). Residues 231 to 251 (SVQQAAKRWSGFSTLARRAPY) are Cytoplasmic-facing. A helical membrane pass occupies residues 252 to 272 (FSSILIGLVGVYMGIHGYTGI). Topologically, residues 273–274 (MQ) are periplasmic.

This sequence belongs to the NiCoT transporter (TC 2.A.52) family. RcnA subfamily.

The protein localises to the cell inner membrane. Its function is as follows. Efflux system for nickel and cobalt. The protein is Nickel/cobalt efflux system RcnA (rcnA) of Salmonella paratyphi A (strain ATCC 9150 / SARB42).